A 787-amino-acid chain; its full sequence is ATP-dependent RNA helicase dbp4 (787 aa).

Positions 1 to 28 (MAPAAGPRTGKHAKPQRSKTLKRKRGQE) are disordered. Over residues 9-25 (TGKHAKPQRSKTLKRKR) the composition is skewed to basic residues. The Q motif signature appears at 47–75 (KSFSDLPLSEPTASGLASSHYKTLTDIQS). The Helicase ATP-binding domain maps to 78–252 (ISHALKGRDI…RLSLQDPEYV (175 aa)). 91-98 (AKTGSGKT) provides a ligand contact to ATP. The short motif at 200-203 (DEAD) is the DEAD box element. A Helicase C-terminal domain is found at 278–437 (KLDILWSFIR…SIKDQLQNMC (160 aa)). 4 disordered regions span residues 494–542 (GDDT…DRMF), 560–579 (DDGTMVAPNAGAGADADEDD), 586–618 (RRFDAGDKDLGSSGDEDDESEKGNKKNVKVRRE), and 653–776 (DEEQ…QTLE). Basic and acidic residues predominate over residues 522–542 (GEKKSKKKEEPQVRTKYDRMF). 2 stretches are compositionally biased toward basic and acidic residues: residues 586–595 (RRFDAGDKDL) and 656–690 (QFKARGDAKDQQAKFLAEEAERTRLADMEDKEIAK). Residues 691-700 (QKRREKKEKR) show a composition bias toward basic residues. The segment covering 741-755 (KFTEANDREEAEPWY) has biased composition (basic and acidic residues).

This sequence belongs to the DEAD box helicase family. DDX10/DBP4 subfamily. In terms of assembly, interacts with the U3 and U14 snoRNAs. Associates with pre-ribosomal complexes.

It is found in the nucleus. The protein localises to the nucleolus. The enzyme catalyses ATP + H2O = ADP + phosphate + H(+). ATP-dependent RNA helicase required for ribosome biogenesis. Involved in the release of U14 snoRNA in pre-ribosomal complexes. Required for pre-rRNA cleavage at site A2. In Aspergillus fumigatus (strain ATCC MYA-4609 / CBS 101355 / FGSC A1100 / Af293) (Neosartorya fumigata), this protein is ATP-dependent RNA helicase dbp4 (dbp4).